The chain runs to 2489 residues: Protein YPR117W (2489 aa).

2 consecutive transmembrane segments (helical) span residues 19–39 and 128–148; these read FMLF…WILM and VLSI…LALT. N-linked (GlcNAc...) asparagine glycans are attached at residues Asn-191, Asn-210, Asn-311, Asn-452, Asn-468, Asn-605, Asn-638, Asn-663, Asn-698, Asn-789, Asn-835, Asn-981, Asn-1255, Asn-1404, and Asn-1476. Residues 1610 to 1676 are a coiled coil; it reads LTQEKLATER…RLHTVNTILS (67 aa). Residues 1685–1704 form a disordered region; sequence PGGNTDGDSSSSLSDTDVNL. The segment covering 1690–1704 has biased composition (low complexity); it reads DGDSSSSLSDTDVNL. N-linked (GlcNAc...) asparagine glycosylation is found at Asn-1978 and Asn-2189. Phosphoserine occurs at positions 2254 and 2278. N-linked (GlcNAc...) asparagine glycosylation is present at Asn-2279. Residues 2451–2471 are compositionally biased toward polar residues; the sequence is SSTHSSDIRSINSDETYNEND. Residues 2451-2489 are disordered; that stretch reads SSTHSSDIRSINSDETYNENDGNGVKPFYPVTSEFSKNK.

Its subcellular location is the cell membrane. It localises to the endoplasmic reticulum membrane. The protein resides in the mitochondrion membrane. Functionally, tube-forming lipid transport protein which may bind to phosphatidylinositols and may affect phosphatidylinositol-4,5-bisphosphate (PtdIns-4,5-P2) distribution. This chain is Protein YPR117W, found in Saccharomyces cerevisiae (strain ATCC 204508 / S288c) (Baker's yeast).